Here is a 96-residue protein sequence, read N- to C-terminus: MNFVSSILIRWCDVPVYILLRKCVIYKFAYSSRKIESVHCAITDDEVMSYNNEDMVPFSAINLPIRFLIFYNAFRSNTSWNYNESQIGNLTISKQS.

The protein localises to the mitochondrion. This is an uncharacterized protein from Schizosaccharomyces pombe (strain 972 / ATCC 24843) (Fission yeast).